The sequence spans 295 residues: MEKMSRQLPLNPTFIPPPYGVLRSLLENPLKLPLHPEDAFSKDRDKGKKLDDGSNSPTVPQSAFLGPTLWDKTLPYDGDTFQLEYMDLEEFLSENGIPPSPSQHDHSPHPPGLQPASSTAPSVMDLSSRATAPLHPGIPSPNCMQNPIRPGQLLPANRNTPSPIDPDTIQVPVGYEPDPADLALSSIPGPEMFDPRKRKFSEEELKPQPMIKKARKVFIPDDLKDDKYWARRRKNNMAAKRSRDARRLKENQIAIRASFLEKENSALRQEVADLRKELGKCKNILAKYEARHGPL.

Residues 34–52 (LHPEDAFSKDRDKGKKLDD) are compositionally biased toward basic and acidic residues. Disordered regions lie at residues 34–69 (LHPEDAFSKDRDKGKKLDDGSNSPTVPQSAFLGPTL) and 93–160 (SENG…NRNT). Positions 225–288 (DDKYWARRRK…GKCKNILAKY (64 aa)) constitute a bZIP domain. A basic motif region spans residues 227–247 (KYWARRRKNNMAAKRSRDARR). The tract at residues 248–255 (LKENQIAI) is leucine-zipper.

It belongs to the bZIP family. PAR subfamily. Binds DNA specifically as homodimer or heterodimer with other PAR factors. Isoform HLF43 is abundant in brain, liver and kidney. Isoform HLF36 is expressed only in the liver. Both isoforms accumulate in the liver with different circadian amplitudes. Isoform HLF36 reaches peak expression levels between 8 and 12 p.m. Isoform HLF43 displays a more pronounced fluctuation through the day.

It localises to the nucleus. The protein is Hepatic leukemia factor (Hlf) of Rattus norvegicus (Rat).